The following is a 390-amino-acid chain: Phosphopentomutase (390 aa).

The Mn(2+) site is built by aspartate 10, aspartate 282, histidine 287, aspartate 323, histidine 324, and histidine 335.

It belongs to the phosphopentomutase family. Requires Mn(2+) as cofactor.

It is found in the cytoplasm. It carries out the reaction 2-deoxy-alpha-D-ribose 1-phosphate = 2-deoxy-D-ribose 5-phosphate. The catalysed reaction is alpha-D-ribose 1-phosphate = D-ribose 5-phosphate. The protein operates within carbohydrate degradation; 2-deoxy-D-ribose 1-phosphate degradation; D-glyceraldehyde 3-phosphate and acetaldehyde from 2-deoxy-alpha-D-ribose 1-phosphate: step 1/2. Functionally, isomerase that catalyzes the conversion of deoxy-ribose 1-phosphate (dRib-1-P) and ribose 1-phosphate (Rib-1-P) to deoxy-ribose 5-phosphate (dRib-5-P) and ribose 5-phosphate (Rib-5-P), respectively. The polypeptide is Phosphopentomutase (Lachnoclostridium phytofermentans (strain ATCC 700394 / DSM 18823 / ISDg) (Clostridium phytofermentans)).